The primary structure comprises 150 residues: Arginine repressor (150 aa).

Belongs to the ArgR family.

The protein localises to the cytoplasm. It functions in the pathway amino-acid biosynthesis; L-arginine biosynthesis [regulation]. Functionally, regulates arginine biosynthesis genes. This is Arginine repressor from Clostridium botulinum (strain Eklund 17B / Type B).